The following is a 476-amino-acid chain: Aspartyl/glutamyl-tRNA(Asn/Gln) amidotransferase subunit B (476 aa).

It belongs to the GatB/GatE family. GatB subfamily. Heterotrimer of A, B and C subunits.

The catalysed reaction is L-glutamyl-tRNA(Gln) + L-glutamine + ATP + H2O = L-glutaminyl-tRNA(Gln) + L-glutamate + ADP + phosphate + H(+). It catalyses the reaction L-aspartyl-tRNA(Asn) + L-glutamine + ATP + H2O = L-asparaginyl-tRNA(Asn) + L-glutamate + ADP + phosphate + 2 H(+). In terms of biological role, allows the formation of correctly charged Asn-tRNA(Asn) or Gln-tRNA(Gln) through the transamidation of misacylated Asp-tRNA(Asn) or Glu-tRNA(Gln) in organisms which lack either or both of asparaginyl-tRNA or glutaminyl-tRNA synthetases. The reaction takes place in the presence of glutamine and ATP through an activated phospho-Asp-tRNA(Asn) or phospho-Glu-tRNA(Gln). This chain is Aspartyl/glutamyl-tRNA(Asn/Gln) amidotransferase subunit B, found in Clostridium botulinum (strain Okra / Type B1).